The primary structure comprises 83 residues: Small ribosomal subunit protein uS17 (83 aa).

It belongs to the universal ribosomal protein uS17 family. As to quaternary structure, part of the 30S ribosomal subunit.

Functionally, one of the primary rRNA binding proteins, it binds specifically to the 5'-end of 16S ribosomal RNA. The protein is Small ribosomal subunit protein uS17 of Chlamydia muridarum (strain MoPn / Nigg).